The chain runs to 391 residues: Putative 12-oxophytodienoate reductase 6 (391 aa).

FMN-binding positions include 42–44 (PMT), Ala75, and Gln117. 189–192 (HGAN) contributes to the substrate binding site. Catalysis depends on Tyr194, which acts as the Proton donor. Arg241 contributes to the FMN binding site. Arg282 lines the substrate pocket. Residues Gly312 and 333-334 (GR) each bind FMN. Residues 372 to 391 (YPFLDEHHHDDDDDSNAPSA) are disordered. The span at 382-391 (DDDDSNAPSA) shows a compositional bias: acidic residues.

It belongs to the NADH:flavin oxidoreductase/NADH oxidase family. The cofactor is FMN.

Functionally, putative oxophytodienoate reductase that may be involved in the biosynthesis or metabolism of oxylipin signaling molecules. In Oryza sativa subsp. japonica (Rice), this protein is Putative 12-oxophytodienoate reductase 6 (OPR6).